A 318-amino-acid chain; its full sequence is MFMINVLTLIIPILLAVAFLTLVERKVLGYMQFRKGPNVVGPYGLLQPIADAIKLFIKEPLRPATSSISMFILAPILALTLALTMWIPLPMPYPLINMNLGVLFMLAMSSLAVYSILWSGWASNSKYALIGALRAVAQTISYEVTLAIILLSVLLMNGSFTLSTLIITQEQVWLIFPAWPLAMMWFISTLAETNRAPFDLTEGESELVSGFNVEYAAGPFALFFMAEYANIIMMNIFTTTLFLGAFHNPYMPELYTINFTIKSLLLSITFLWIRASYPRFRYDQLMHLLWKNFLPLTLALCMWHVSLPILLSSIPPQT.

The next 8 helical transmembrane spans lie at 2–22, 68–88, 100–120, 147–167, 172–192, 217–237, 253–273, and 294–314; these read FMIN…FLTL, ISMF…MWIP, LGVL…LWSG, AIIL…TLII, VWLI…TLAE, AGPF…MNIF, ELYT…FLWI, and LPLT…LSSI.

This sequence belongs to the complex I subunit 1 family.

The protein resides in the mitochondrion inner membrane. It carries out the reaction a ubiquinone + NADH + 5 H(+)(in) = a ubiquinol + NAD(+) + 4 H(+)(out). Its function is as follows. Core subunit of the mitochondrial membrane respiratory chain NADH dehydrogenase (Complex I) that is believed to belong to the minimal assembly required for catalysis. Complex I functions in the transfer of electrons from NADH to the respiratory chain. The immediate electron acceptor for the enzyme is believed to be ubiquinone. The chain is NADH-ubiquinone oxidoreductase chain 1 (MT-ND1) from Ovis aries (Sheep).